The sequence spans 168 residues: Transcriptional regulator MraZ (168 aa).

2 SpoVT-AbrB domains span residues 8-51 and 90-140; these read EYNQ…GGDR and ALNM…KADT.

Belongs to the MraZ family. As to quaternary structure, forms oligomers.

It is found in the cytoplasm. The protein resides in the nucleoid. This is Transcriptional regulator MraZ from Cereibacter sphaeroides (strain ATCC 17029 / ATH 2.4.9) (Rhodobacter sphaeroides).